The following is a 364-amino-acid chain: Probable tartrate dehydrogenase/decarboxylase TtuC (364 aa).

Mn(2+)-binding residues include D222, D246, and D250.

This sequence belongs to the isocitrate and isopropylmalate dehydrogenases family. It depends on Mg(2+) as a cofactor. The cofactor is Mn(2+). Requires K(+) as cofactor.

The protein localises to the cytoplasm. It catalyses the reaction tartrate + NAD(+) = 2-hydroxy-3-oxosuccinate + NADH + H(+). The enzyme catalyses (2R,3S)-tartrate + NAD(+) = 2-hydroxy-3-oxosuccinate + NADH + H(+). The catalysed reaction is (2R,3R)-tartrate + NAD(+) = 2-hydroxy-3-oxosuccinate + NADH + H(+). It carries out the reaction (2R,3R)-tartrate + H(+) = (R)-glycerate + CO2. It catalyses the reaction (R)-malate + NAD(+) = pyruvate + CO2 + NADH. The protein operates within carbohydrate acid metabolism; tartrate degradation; 2-hydroxy-3-oxosuccinate from L-tartrate: step 1/1. It functions in the pathway carbohydrate acid metabolism; tartrate degradation; 2-hydroxy-3-oxosuccinate from meso-tartrate: step 1/1. It participates in carbohydrate acid metabolism; tartrate degradation; D-glycerate from L-tartrate: step 1/1. Its function is as follows. Has multiple catalytic activities. Apart from catalyzing the oxidation of (+)-tartrate to oxaloglycolate, also converts meso-tartrate to D-glycerate and catalyzes the oxidative decarboxylation of D-malate to pyruvate. This chain is Probable tartrate dehydrogenase/decarboxylase TtuC (ttuC), found in Agrobacterium vitis (Rhizobium vitis).